The chain runs to 376 residues: Cytochrome b (376 aa).

Helical transmembrane passes span tyrosine 28–serine 48, tryptophan 72–leucine 94, serine 107–valine 127, and phenylalanine 169–phenylalanine 189. Heme b contacts are provided by histidine 78 and histidine 92. Histidine 173 and histidine 187 together coordinate heme b. Residue histidine 192 participates in a ubiquinone binding. Helical transmembrane passes span leucine 214–leucine 234, valine 274–leucine 294, valine 317–proline 337, and isoleucine 340–leucine 360.

It belongs to the cytochrome b family. The main subunits of complex b-c1 are: cytochrome b, cytochrome c1 and the Rieske protein. Heme b is required as a cofactor.

It is found in the mitochondrion inner membrane. Component of the ubiquinol-cytochrome c reductase complex (complex III or cytochrome b-c1 complex) that is part of the mitochondrial respiratory chain. The b-c1 complex mediates electron transfer from ubiquinol to cytochrome c. Contributes to the generation of a proton gradient across the mitochondrial membrane that is then used for ATP synthesis. In Plasmodium falciparum, this protein is Cytochrome b (MT-CYB).